We begin with the raw amino-acid sequence, 678 residues long: Putative cyclic nucleotide-gated ion channel 15 (678 aa).

Over Met1–Lys81 the chain is Cytoplasmic. Residues Ile82–Val102 form a helical membrane-spanning segment. Topologically, residues Met103–Leu115 are extracellular. A helical membrane pass occupies residues Glu116 to Ile136. The Cytoplasmic portion of the chain corresponds to Arg137–Ser170. A helical transmembrane segment spans residues Phe171–Pro191. Residues Asn192–Asn203 lie on the Extracellular side of the membrane. A helical transmembrane segment spans residues Val204–Ser224. The Cytoplasmic portion of the chain corresponds to Arg225–Asn245. The chain crosses the membrane as a helical span at residues Leu246 to Glu266. At Arg267–Ala364 the chain is on the extracellular side. Residues Gly365–Ile385 form a helical membrane-spanning segment. At Gly386 to Glu678 the chain is on the cytoplasmic side. Residues Leu471–Leu595 and Glu542 contribute to the a nucleoside 3',5'-cyclic phosphate site. Residues Phe587 to Tyr602 form a calmodulin-binding region. The 32-residue stretch at Arg607 to Tyr638 folds into the IQ domain. Positions Arg656–Gln668 are enriched in polar residues. Residues Arg656–Glu678 are disordered.

It belongs to the cyclic nucleotide-gated cation channel (TC 1.A.1.5) family. Homotetramer or heterotetramer.

It localises to the cell membrane. In terms of biological role, putative cyclic nucleotide-gated ion channel. The polypeptide is Putative cyclic nucleotide-gated ion channel 15 (CNGC15) (Arabidopsis thaliana (Mouse-ear cress)).